Reading from the N-terminus, the 362-residue chain is Notoamide biosynthesis cluster protein J' (362 aa).

Positions 1 to 22 (MRNMATMLHLLTLILLTSPAST) are cleaved as a signal peptide. N157, N190, N280, and N338 each carry an N-linked (GlcNAc...) asparagine glycan.

Functionally, part of the gene cluster that mediates the biosynthesis of notoamide, a fungal indole alkaloid that belongs to a family of natural products containing a characteristic bicyclo[2.2.2]diazaoctane core. The first step of notoamide biosynthesis involves coupling of L-proline and L-tryptophan by the bimodular NRPS notE', to produce cyclo-L-tryptophan-L-proline called brevianamide F. The reverse prenyltransferase notF' then acts as a deoxybrevianamide E synthase and converts brevianamide F to deoxybrevianamide E via reverse prenylation at C-2 of the indole ring leading to the bicyclo[2.2.2]diazaoctane core. Deoxybrevianamide E is further hydroxylated at C-6 of the indole ring, likely catalyzed by the cytochrome P450 monooxygenase notG', to yield 6-hydroxy-deoxybrevianamide E. 6-hydroxy-deoxybrevianamide E is a specific substrate of the prenyltransferase notC' for normal prenylation at C-7 to produce 6-hydroxy-7-prenyl-deoxybrevianamide, also called notoamide S. As the proposed pivotal branching point in notoamide biosynthesis, notoamide S can be diverted to notoamide E through an oxidative pyran ring closure putatively catalyzed by either notH' cytochrome P450 monooxygenase or the notD' FAD-linked oxidoreductase. This step would be followed by an indole 2,3-epoxidation-initiated pinacol-like rearrangement catalyzed by the notB' FAD-dependent monooxygenase leading to the formation of notoamide C and notoamide D. On the other hand notoamide S is converted to notoamide T by notH' (or notD'), a bifunctional oxidase that also functions as the intramolecular Diels-Alderase responsible for generation of (-)-notoamide T. To generate antipodal (+)-notoaminide T, notH (or notD) in Aspergillus strain MF297-2 is expected to catalyze a Diels-Alder reaction leading to the opposite stereochemistry. The remaining oxidoreductase notD' (or notH') likely catalyzes the oxidative pyran ring formation to yield (-)-stephacidin A. The FAD-dependent monooxygenase notI' is highly similar to notB' and is predicted to catalyze a similar conversion from (-)-stephacidin A to (+)-notoamide B via the 2,3-epoxidation of (-)-stephacidin A followed by a pinacol-type rearrangement. Finally, it remains unclear which enzyme could be responsible for the final hydroxylation steps leading to notoamide A and sclerotiamide. The function of notJ' in the notoamide biosynthesis has not been determined yet. In Aspergillus versicolor, this protein is Notoamide biosynthesis cluster protein J'.